A 311-amino-acid chain; its full sequence is Probable cell division protein WhiA (311 aa).

A DNA-binding region (H-T-H motif) is located at residues threonine 277–glutamate 311.

The protein belongs to the WhiA family.

Involved in cell division and chromosome segregation. This Lactobacillus acidophilus (strain ATCC 700396 / NCK56 / N2 / NCFM) protein is Probable cell division protein WhiA.